Consider the following 139-residue polypeptide: MLSTLYQNDLKKKRNRRRNRSAALVCCPQKEGSVLKPRIVTPKKPNSARRPVAKAKLTNKKFVVAHIPGTGHNLRKHSTILVRGGGCRDLPGVRHTCIRGVSDFLGVRDKTKRRSIYGIKRPPEMAKRVRRKFRAIFGQ.

Residues 1 to 21 (MLSTLYQNDLKKKRNRRRNRS) form a disordered region. The segment covering 11–20 (KKKRNRRRNR) has biased composition (basic residues).

This sequence belongs to the universal ribosomal protein uS12 family.

The protein localises to the mitochondrion. Functionally, protein S12 is involved in the translation initiation step. This chain is Small ribosomal subunit protein uS12m (RPS12), found in Paramecium tetraurelia.